We begin with the raw amino-acid sequence, 72 residues long: MAKPLGTTGEFFRRRDEWRKHPMLSNQMRHALPGIGIGVGAFCVYLVGEQIYSKLMAPSSQSSHQKQPAPSH.

Residues Ala31–Gly48 form a helical membrane-spanning segment.

Belongs to the complex I NDUFB3 subunit family. Complex I is composed of at least 49 different subunits.

Its subcellular location is the mitochondrion inner membrane. In terms of biological role, accessory subunit of the mitochondrial membrane respiratory chain NADH dehydrogenase (Complex I), that is believed not to be involved in catalysis. Complex I functions in the transfer of electrons from NADH to the respiratory chain. The immediate electron acceptor for the enzyme is believed to be ubiquinone. This is NADH dehydrogenase [ubiquinone] 1 beta subcomplex subunit 3-A from Arabidopsis thaliana (Mouse-ear cress).